Here is a 166-residue protein sequence, read N- to C-terminus: NADH-quinone oxidoreductase subunit C (166 aa).

Belongs to the complex I 30 kDa subunit family. NDH-1 is composed of 14 different subunits. Subunits NuoB, C, D, E, F, and G constitute the peripheral sector of the complex.

It is found in the cell inner membrane. The enzyme catalyses a quinone + NADH + 5 H(+)(in) = a quinol + NAD(+) + 4 H(+)(out). NDH-1 shuttles electrons from NADH, via FMN and iron-sulfur (Fe-S) centers, to quinones in the respiratory chain. The immediate electron acceptor for the enzyme in this species is believed to be a menaquinone. Couples the redox reaction to proton translocation (for every two electrons transferred, four hydrogen ions are translocated across the cytoplasmic membrane), and thus conserves the redox energy in a proton gradient. This is NADH-quinone oxidoreductase subunit C from Chlorobium phaeobacteroides (strain DSM 266 / SMG 266 / 2430).